A 137-amino-acid polypeptide reads, in one-letter code: 3-hydroxyacyl-[acyl-carrier-protein] dehydratase FabZ (137 aa).

The active site involves His-46.

This sequence belongs to the thioester dehydratase family. FabZ subfamily.

It localises to the cytoplasm. It catalyses the reaction a (3R)-hydroxyacyl-[ACP] = a (2E)-enoyl-[ACP] + H2O. Involved in unsaturated fatty acids biosynthesis. Catalyzes the dehydration of short chain beta-hydroxyacyl-ACPs and long chain saturated and unsaturated beta-hydroxyacyl-ACPs. The chain is 3-hydroxyacyl-[acyl-carrier-protein] dehydratase FabZ from Thermotoga neapolitana (strain ATCC 49049 / DSM 4359 / NBRC 107923 / NS-E).